We begin with the raw amino-acid sequence, 810 residues long: Plasminogen (810 aa).

Residues 1–19 (MQRKELVLLFLLFLQPGHG) form the signal peptide. The PAN domain occupies 20–98 (IPLDDYVTTQ…RDVILFEKKM (79 aa)). Disulfide bonds link Cys49–Cys73, Cys53–Cys61, Cys103–Cys181, Cys124–Cys164, Cys152–Cys176, Cys185–Cys262, Cys188–Cys316, Cys206–Cys245, Cys234–Cys257, Cys275–Cys352, Cys296–Cys335, Cys324–Cys347, Cys379–Cys456, Cys400–Cys439, Cys428–Cys451, Cys482–Cys561, Cys503–Cys544, Cys532–Cys556, Cys569–Cys685, Cys579–Cys586, Cys607–Cys623, Cys699–Cys766, Cys729–Cys745, and Cys756–Cys784. Kringle domains follow at residues 103-181 (CKVG…IIQC), 185-262 (CMHC…IPRC), 275-352 (CLMG…IPDC), 379-456 (CYQG…LKKC), and 482-561 (CIID…IPHC). Asn339 is a glycosylation site (N-linked (GlcNAc...) asparagine). The tract at residues 398–418 (KKCQPWTSMRPHRHSKTPENY) is disordered. Positions 582-808 (RVGGCVAHPH…YVSWLQDVMR (227 aa)) constitute a Peptidase S1 domain. Residue Ser598 is modified to Phosphoserine. Residues His622 and Asp665 each act as charge relay system in the active site. Catalysis depends on Ser760, which acts as the Charge relay system.

The protein belongs to the peptidase S1 family. Plasminogen subfamily. Interacts with CSPG4 and AMOT. Interacts (via the Kringle domains) with HRG; the interaction tethers PLG to the cell surface and enhances its activation. Interacts (via Kringle 4 domain) with ADA; the interaction stimulates PLG activation when in complex with DPP4. Angiostatin: Interacts with ATP5F1A; the interaction inhibits most of the angiogenic effects of angiostatin. In the presence of the inhibitor, the activation involves only cleavage after Arg-582, yielding two chains held together by two disulfide bonds. In the absence of the inhibitor, the activation involves additionally the removal of the activation peptide.

Its subcellular location is the secreted. The enzyme catalyses Preferential cleavage: Lys-|-Xaa &gt; Arg-|-Xaa, higher selectivity than trypsin. Converts fibrin into soluble products.. Its activity is regulated as follows. Converted into plasmin by plasminogen activators, both plasminogen and its activator being bound to fibrin. Cannot be activated with streptokinase. Functionally, plasmin dissolves the fibrin of blood clots and acts as a proteolytic factor in a variety of other processes including embryonic development, tissue remodeling, tumor invasion, and inflammation. In ovulation, weakens the walls of the Graafian follicle. It activates the urokinase-type plasminogen activator, collagenases and several complement zymogens, such as C1, C4 and C5. Cleavage of fibronectin and laminin leads to cell detachment and apoptosis. Also cleaves fibrin, thrombospondin and von Willebrand factor. Its role in tissue remodeling and tumor invasion may be modulated by CSPG4. Binds to cells. The protein is Plasminogen (PLG) of Erinaceus europaeus (Western European hedgehog).